The primary structure comprises 369 residues: Serine proteinase inhibitor 1 (369 aa).

This sequence belongs to the serpin family. Poxviruses subfamily.

Its function is as follows. Important in virulence. The sequence is that of Serine proteinase inhibitor 1 (SPI-1) from Oryctolagus cuniculus (Rabbit).